A 233-amino-acid polypeptide reads, in one-letter code: Probable tetraheme cytochrome c-type (233 aa).

Residues 1–28 form the signal peptide; sequence MTRLQKGSIGTLLTGALLGIVLVAVVFG. Positions 39, 42, 45, 67, 70, 71, 93, 131, 134, 135, 159, 162, 163, and 168 each coordinate heme. The interval 182 to 233 is disordered; that stretch reads QGKLVLKPEDDGDDEEADEDEDEETEEADDSSDSESASSSDNSDNEDDNNDE. Composition is skewed to acidic residues over residues 191-214 and 224-233; these read DDGD…DSSD and SDNEDDNNDE.

The protein belongs to the NapC/NirT/NrfH family. Binds 4 heme groups per subunit.

Its subcellular location is the periplasm. In Nitrosomonas europaea (strain ATCC 19718 / CIP 103999 / KCTC 2705 / NBRC 14298), this protein is Probable tetraheme cytochrome c-type (cycX1).